The sequence spans 202 residues: 3-isopropylmalate dehydratase small subunit (202 aa).

This sequence belongs to the LeuD family. LeuD type 1 subfamily. In terms of assembly, heterodimer of LeuC and LeuD.

The enzyme catalyses (2R,3S)-3-isopropylmalate = (2S)-2-isopropylmalate. Its pathway is amino-acid biosynthesis; L-leucine biosynthesis; L-leucine from 3-methyl-2-oxobutanoate: step 2/4. In terms of biological role, catalyzes the isomerization between 2-isopropylmalate and 3-isopropylmalate, via the formation of 2-isopropylmaleate. In Nocardia farcinica (strain IFM 10152), this protein is 3-isopropylmalate dehydratase small subunit.